A 351-amino-acid chain; its full sequence is MSNITDPQMWDYDGDPNFTGMPPIDEDYRPCRLETETLNKYVVIVTYALVFLLSLLGNSLVMLVILYSRVGRSVTDVYLLNLALADLLFALTLPIWAVSKVNGWIFGTLLCKVVSLLKEVNFYSGILLLACISVDRYLAIVHATRTLTQKRHLVKFVCLSCWGLSMILSLPFFLFRQAYHPKNSSPVCYEVLGNDTAKWRMVLRILPHTFGFIVPLFVMLFCYGFALCTLFKAHMGQKHRAMRVIFAVVLIFLLCWLPYNLVLLADTLMRTQLIKESCERRNDIGWALDATEILGFLHSCLNPIIYAFIGQNFRHGFLKILAMHGLVSKEFLARHHVTSYTSSSVNVSSNL.

Residues 1-46 (MSNITDPQMWDYDGDPNFTGMPPIDEDYRPCRLETETLNKYVVIVT) are Extracellular-facing. Asparagine 3 carries N-linked (GlcNAc...) asparagine glycosylation. The helical transmembrane segment at 47–67 (YALVFLLSLLGNSLVMLVILY) threads the bilayer. Topologically, residues 68–76 (SRVGRSVTD) are cytoplasmic. Residues 77-97 (VYLLNLALADLLFALTLPIWA) traverse the membrane as a helical segment. Residues 98–112 (VSKVNGWIFGTLLCK) are Extracellular-facing. A disulfide bridge links cysteine 111 with cysteine 188. The chain crosses the membrane as a helical span at residues 113-133 (VVSLLKEVNFYSGILLLACIS). At 134–154 (VDRYLAIVHATRTLTQKRHLV) the chain is on the cytoplasmic side. Residues 155–175 (KFVCLSCWGLSMILSLPFFLF) traverse the membrane as a helical segment. Residues 176-209 (RQAYHPKNSSPVCYEVLGNDTAKWRMVLRILPHT) lie on the Extracellular side of the membrane. Asparagine 194 carries N-linked (GlcNAc...) asparagine glycosylation. Residues 210-230 (FGFIVPLFVMLFCYGFALCTL) form a helical membrane-spanning segment. The Cytoplasmic segment spans residues 231-243 (FKAHMGQKHRAMR). A helical membrane pass occupies residues 244-264 (VIFAVVLIFLLCWLPYNLVLL). At 265–289 (ADTLMRTQLIKESCERRNDIGWALD) the chain is on the extracellular side. A helical transmembrane segment spans residues 290-310 (ATEILGFLHSCLNPIIYAFIG). Residues 311–351 (QNFRHGFLKILAMHGLVSKEFLARHHVTSYTSSSVNVSSNL) are Cytoplasmic-facing.

This sequence belongs to the G-protein coupled receptor 1 family. In terms of assembly, interacts with IL8. Interacts with GNAI2.

It is found in the cell membrane. Its function is as follows. Receptor to interleukin-8, which is a powerful neutrophils chemotactic factor. Binding of IL-8 to the receptor causes activation of neutrophils. This response is mediated via a G-protein that activates a phosphatidylinositol-calcium second messenger system. The chain is C-X-C chemokine receptor type 1 (CXCR1) from Pongo pygmaeus (Bornean orangutan).